Consider the following 351-residue polypeptide: Protein RecA (351 aa).

67 to 74 (GPESSGKT) contacts ATP.

It belongs to the RecA family.

The protein resides in the cytoplasm. Its function is as follows. Can catalyze the hydrolysis of ATP in the presence of single-stranded DNA, the ATP-dependent uptake of single-stranded DNA by duplex DNA, and the ATP-dependent hybridization of homologous single-stranded DNAs. It interacts with LexA causing its activation and leading to its autocatalytic cleavage. This chain is Protein RecA, found in Arthrobacter sp. (strain FB24).